We begin with the raw amino-acid sequence, 467 residues long: Argininosuccinate lyase 1 (467 aa).

Belongs to the lyase 1 family. Argininosuccinate lyase subfamily.

The protein resides in the cytoplasm. It carries out the reaction 2-(N(omega)-L-arginino)succinate = fumarate + L-arginine. The protein operates within amino-acid biosynthesis; L-arginine biosynthesis; L-arginine from L-ornithine and carbamoyl phosphate: step 3/3. This is Argininosuccinate lyase 1 from Rhizobium meliloti (strain 1021) (Ensifer meliloti).